Reading from the N-terminus, the 301-residue chain is N-acetylmuramic acid 6-phosphate etherase (301 aa).

Residues 57–220 form the SIS domain; sequence IAEAFRQGGR…TTGAMIRTGK (164 aa). Residue E85 is the Proton donor of the active site. The active site involves E116.

It belongs to the GCKR-like family. MurNAc-6-P etherase subfamily. Homodimer.

It catalyses the reaction N-acetyl-D-muramate 6-phosphate + H2O = N-acetyl-D-glucosamine 6-phosphate + (R)-lactate. The protein operates within amino-sugar metabolism; 1,6-anhydro-N-acetylmuramate degradation. It functions in the pathway amino-sugar metabolism; N-acetylmuramate degradation. It participates in cell wall biogenesis; peptidoglycan recycling. Specifically catalyzes the cleavage of the D-lactyl ether substituent of MurNAc 6-phosphate, producing GlcNAc 6-phosphate and D-lactate. Together with AnmK, is also required for the utilization of anhydro-N-acetylmuramic acid (anhMurNAc) either imported from the medium or derived from its own cell wall murein, and thus plays a role in cell wall recycling. This Photorhabdus laumondii subsp. laumondii (strain DSM 15139 / CIP 105565 / TT01) (Photorhabdus luminescens subsp. laumondii) protein is N-acetylmuramic acid 6-phosphate etherase.